We begin with the raw amino-acid sequence, 777 residues long: Lon protease (777 aa).

The region spanning 11–204 (IPVLPLRDVV…FLMAIMESEI (194 aa)) is the Lon N-terminal domain. 356 to 363 (GPPGVGKT) provides a ligand contact to ATP. The 182-residue stretch at 592–773 (TNQIGQVIGL…EEVLKLSLEK (182 aa)) folds into the Lon proteolytic domain. Catalysis depends on residues Ser679 and Lys722.

It belongs to the peptidase S16 family. In terms of assembly, homohexamer. Organized in a ring with a central cavity.

It localises to the cytoplasm. The catalysed reaction is Hydrolysis of proteins in presence of ATP.. ATP-dependent serine protease that mediates the selective degradation of mutant and abnormal proteins as well as certain short-lived regulatory proteins. Required for cellular homeostasis and for survival from DNA damage and developmental changes induced by stress. Degrades polypeptides processively to yield small peptide fragments that are 5 to 10 amino acids long. Binds to DNA in a double-stranded, site-specific manner. The chain is Lon protease from Buchnera aphidicola subsp. Acyrthosiphon pisum (strain APS) (Acyrthosiphon pisum symbiotic bacterium).